Here is a 249-residue protein sequence, read N- to C-terminus: Aquaporin TIP2-1 (249 aa).

The next 2 membrane-spanning stretches (helical) occupy residues 20–40 and 54–74; these read AYVA…GSAI and AGLV…VSVA. Residues 83 to 85 carry the NPA 1 motif; sequence NPA. Transmembrane regions (helical) follow at residues 102 to 122, 141 to 161, and 168 to 188; these read VFYW…LGFV, GVVF…ATAA, and LGTI…LAAG. The NPA 2 motif lies at 196-198; the sequence is NPA. The chain crosses the membrane as a helical span at residues 217 to 237; the sequence is WVGPLVGGGLAGLVYGDVFIG.

Belongs to the MIP/aquaporin (TC 1.A.8) family. TIP (TC 1.A.8.10) subfamily.

It localises to the vacuole membrane. Functionally, aquaporins facilitate the transport of water and small neutral solutes across cell membranes. This is Aquaporin TIP2-1 (TIP2-1) from Zea mays (Maize).